Consider the following 90-residue polypeptide: Secretoglobin family 1D member 1 (90 aa).

Positions 1 to 21 (MRLSVCLLLLTLALCCYRANA) are cleaved as a signal peptide.

As to quaternary structure, heterodimer of a lipophilin A and a lipophilin C (mammaglobin B) monomer associated head to head. Expressed in lachrymal gland, thymus, kidney, testis, ovary and salivary gland.

The protein localises to the secreted. May bind androgens and other steroids, may also bind estramustine, a chemotherapeutic agent used for prostate cancer. May be under transcriptional regulation of steroid hormones. The polypeptide is Secretoglobin family 1D member 1 (SCGB1D1) (Homo sapiens (Human)).